The sequence spans 128 residues: Probable 4-amino-4-deoxy-L-arabinose-phosphoundecaprenol flippase subunit ArnF (128 aa).

The Cytoplasmic segment spans residues 1-2 (MG). The chain crosses the membrane as a helical span at residues 3–23 (LMWGLFSVIIASVAQLSLGFA). Over 24-35 (ASHLPPMTHLWD) the chain is Periplasmic. The chain crosses the membrane as a helical span at residues 36 to 56 (FIAALLAFGLDARILLLGLLG). Residues 57 to 76 (YLLSVFCWYKTLHKLALSKA) are Cytoplasmic-facing. The helical transmembrane segment at 77–97 (YALLSMSYVLVWIASMVLPGW) threads the bilayer. The Periplasmic portion of the chain corresponds to 98 to 100 (EGT). A helical membrane pass occupies residues 101-121 (FSLKALLGVACIMSGLMLIFL). Over 122 to 128 (PMTKQRY) the chain is Cytoplasmic.

The protein belongs to the ArnF family. As to quaternary structure, heterodimer of ArnE and ArnF.

It is found in the cell inner membrane. It functions in the pathway bacterial outer membrane biogenesis; lipopolysaccharide biosynthesis. Translocates 4-amino-4-deoxy-L-arabinose-phosphoundecaprenol (alpha-L-Ara4N-phosphoundecaprenol) from the cytoplasmic to the periplasmic side of the inner membrane. This is Probable 4-amino-4-deoxy-L-arabinose-phosphoundecaprenol flippase subunit ArnF from Escherichia coli (strain 55989 / EAEC).